The sequence spans 151 residues: Large ribosomal subunit protein bL28c (151 aa).

The N-terminal 74 residues, Met1–Ala74, are a transit peptide targeting the chloroplast.

Belongs to the bacterial ribosomal protein bL28 family. As to quaternary structure, part of the 50S ribosomal subunit.

The protein resides in the plastid. The protein localises to the chloroplast. This is Large ribosomal subunit protein bL28c (RPL28) from Nicotiana tabacum (Common tobacco).